The sequence spans 386 residues: uncharacterized protein (386 aa).

11 helical membrane passes run 3-23 (WFSLFILSIAIGGSFALLVAI), 42-62 (LVGHVDSALIVGLYAFLIFLW), 72-92 (FASFLPALLGFFMIAGSSLFG), 102-122 (VPTIIHPVFFGGVSLFFLGVF), 145-165 (ILSTTVINSFLMPLTYLIAYF), 183-203 (FGGHTHQFVNAGLLISLWLLL), 212-232 (WFLNLLLVVFPITYFFAQIFL), 244-264 (TWGYMVGIGIPTIVYGLITLV), 276-296 (ILVLSVSLYLLGALMGYMIVG), 308-328 (VIASILVGVIALTFMYLQELG), and 333-353 (LGKFEKFIPFSTVLVCFFLSS).

The protein to R.prowazekii RP382.

The protein resides in the cell membrane. This is an uncharacterized protein from Aquifex aeolicus (strain VF5).